A 710-amino-acid chain; its full sequence is Nucleolin (710 aa).

The segment at 1–303 is disordered; it reads MVKLAKAGKN…KKQKVEGTEP (303 aa). Lysine 9, lysine 15, and lysine 16 each carry N6-acetyllysine. The segment covering 24-43 has biased composition (acidic residues); the sequence is VEEDSEDEEMSEDEEDDSSG. Phosphoserine is present on residues serine 28, serine 34, serine 41, and serine 42. The segment covering 56–107 has biased composition (low complexity); that stretch reads AAATSAKKVVVSPTKKVAVATPAKKAAVTPGKKAAATPAKKTVTPAKAVTTP. Copy 1 of the repeat occupies 58-65; the sequence is ATSAKKVV. Residues 58–135 form an 8 X 8 AA tandem repeats of X-T-P-X-K-K-X-X region; it reads ATSAKKVVVS…GAAIPAKGAK (78 aa). Serine 67 carries the phosphoserine modification. 4 positions are modified to phosphothreonine: threonine 69, threonine 76, threonine 84, and threonine 92. 3 tandem repeats follow at residues 75 to 82, 83 to 90, and 91 to 98. Position 96 is an N6-acetyllysine (lysine 96). The residue at position 99 (threonine 99) is a Phosphothreonine. A 5; truncated repeat occupies 99–104; that stretch reads TPAKAV. The residue at position 102 (lysine 102) is an N6-acetyllysine. Repeat 6 spans residues 105 to 112; the sequence is TTPGKKGA. Position 106 is a phosphothreonine (threonine 106). Residue lysine 109 is modified to N6-acetyllysine. Position 113 is a phosphothreonine (threonine 113). Residue lysine 116 is modified to N6-acetyllysine. Tandem repeats lie at residues 120–127 and 128–135. Threonine 121 carries the phosphothreonine modification. Over residues 122 to 137 the composition is skewed to low complexity; the sequence is PGKKGAAIPAKGAKNG. Lysine 124 is modified (N6-acetyllysine). Phosphoserine occurs at positions 145 and 153. Residues 145-171 are compositionally biased toward acidic residues; that stretch reads SDEEEDDDSEEDEEDDEDEDEDEDEIE. Over residues 172–183 the composition is skewed to low complexity; that stretch reads PAAMKAAAAAPA. 2 positions are modified to phosphoserine: serine 184 and serine 206. Residues 184-211 show a composition bias toward acidic residues; sequence SEDEDDEDDEDDEDDDDDEEDDSEEEAM. Threonine 214 carries the post-translational modification Phosphothreonine. Over residues 234 to 272 the composition is skewed to acidic residues; sequence EDEDEEEDDEDEDDDDDEDDEDDDDEDDEEEEEEEEEEP. Basic and acidic residues predominate over residues 273-300; the sequence is VKEAPGKRKKEMAKQKAAPEAKKQKVEG. Lysine 297 is covalently cross-linked (Glycyl lysine isopeptide (Lys-Gly) (interchain with G-Cter in SUMO1); alternate). A Glycyl lysine isopeptide (Lys-Gly) (interchain with G-Cter in SUMO2); alternate cross-link involves residue lysine 297. Threonine 301 carries the post-translational modification Phosphothreonine. 2 RRM domains span residues 307–383 and 393–466; these read FNLF…KPKG and RTLL…YTGE. Lysine 318 carries the post-translational modification N6-acetyllysine. Lysine 324 is covalently cross-linked (Glycyl lysine isopeptide (Lys-Gly) (interchain with G-Cter in SUMO1); alternate). Lysine 324 is covalently cross-linked (Glycyl lysine isopeptide (Lys-Gly) (interchain with G-Cter in SUMO2); alternate). Lysine 348 bears the N6-acetyllysine mark. Phosphoserine is present on serine 356. The residue at position 367 (threonine 367) is a Phosphothreonine. A Glycyl lysine isopeptide (Lys-Gly) (interchain with G-Cter in SUMO2) cross-link involves residue lysine 370. Residue lysine 377 forms a Glycyl lysine isopeptide (Lys-Gly) (interchain with G-Cter in SUMO2); alternate linkage. N6-acetyllysine; alternate is present on lysine 377. 2 positions are modified to N6-acetyllysine: lysine 398 and lysine 403. Phosphothreonine is present on threonine 405. An N6-acetyllysine mark is found at lysine 427 and lysine 444. Phosphoserine is present on residues serine 458 and serine 460. N6-acetyllysine occurs at positions 467 and 477. One can recognise an RRM 3 domain in the interval 486–560; sequence KTLVLSNLSY…RAIRLELQGP (75 aa). Lysine 513 is covalently cross-linked (Glycyl lysine isopeptide (Lys-Gly) (interchain with G-Cter in SUMO2); alternate). Lysine 513 carries the N6-acetyllysine; alternate modification. Lysine 521 carries the post-translational modification N6-acetyllysine. A Phosphoserine modification is found at serine 563. Lysine 572 is subject to N6-acetyllysine. In terms of domain architecture, RRM 4 spans 572–647; sequence KTLFVKGLSE…NKVTLDWAKP (76 aa). Lysine 577 participates in a covalent cross-link: Glycyl lysine isopeptide (Lys-Gly) (interchain with G-Cter in SUMO2); alternate. An N6-acetyllysine; alternate modification is found at lysine 577. A Phosphoserine modification is found at serine 580. Lysine 589 participates in a covalent cross-link: Glycyl lysine isopeptide (Lys-Gly) (interchain with G-Cter in SUMO1); alternate. Lysine 589 is covalently cross-linked (Glycyl lysine isopeptide (Lys-Gly) (interchain with G-Cter in SUMO2); alternate). Residues serine 591 and serine 619 each carry the phosphoserine modification. Lysine 624 participates in a covalent cross-link: Glycyl lysine isopeptide (Lys-Gly) (interchain with G-Cter in SUMO2). Residues 640–710 are disordered; sequence VTLDWAKPKG…KPQGKKTKFE (71 aa). At lysine 646 the chain carries N6-acetyllysine. A compositionally biased stretch (gly residues) spans 650 to 696; the sequence is EGGFGGRGGGRGGFGGRGGGRGGRGGFGGRGRGGFGGRGGFRGGRGG. Arginine 656, arginine 660, arginine 666, arginine 670, arginine 673, arginine 679, arginine 681, arginine 687, and arginine 691 each carry asymmetric dimethylarginine. An Asymmetric dimethylarginine; alternate modification is found at arginine 694. The residue at position 694 (arginine 694) is an Omega-N-methylarginine; alternate. A compositionally biased stretch (basic and acidic residues) spans 697–710; the sequence is GGDHKPQGKKTKFE.

Identified in a IGF2BP1-dependent mRNP granule complex containing untranslated mRNAs. Component of the SWAP complex that consists of NPM1, NCL/nucleolin, PARP1 and SWAP70. Component of a complex which is at least composed of HTATSF1/Tat-SF1, the P-TEFb complex components CDK9 and CCNT1, RNA polymerase II, SUPT5H, and NCL/nucleolin. Interacts with AICDA. Interacts with APTX. Interacts with C1QBP. Interacts with ERBB4. Interacts (via C-terminus) with FMR1 isoform 6 (via N-terminus). Interacts with GZF1; this interaction is important for nucleolar localization of GZF1. Interacts with NSUN2. Interacts with NVL. Interacts (via N-terminus domain) with SETX. Interacts (via RRM1 and C-terminal RRM4/Arg/Gly-rich domains) with TERT; the interaction is important for nucleolar localization of TERT. Interacts with WDR46. Interacts with ZFP36. Interacts with LRRC34. Interacts with RRP1B. Interacts with HNRNPU; this interaction occurs during mitosis. Interacts with RIOK1; RIOK1 recruits NCL to PRMT5 for symmetrically methylation. Interacts with ZBTB7B. Interacts with MDK; this interaction promotes NCL clustering and lateral movements of this complex into lipid rafts leading to MDK internalization. Interacts with HDGF (isoform 1). Interacts with ALKBH2. Interacts with IGFBP5; this interaction is necessary for IGFBP5 localization to the nucleus. Interacts with DDX24 (when ubiquitinated); this interaction may be important during ribosome biogenesis. Some glutamate residues are glycylated by TTLL8. This modification occurs exclusively on glutamate residues and results in a glycine chain on the gamma-carboxyl group. Post-translationally, symmetrically methylated by PRMT5.

It localises to the nucleus. It is found in the nucleolus. The protein localises to the cytoplasm. Nucleolin is the major nucleolar protein of growing eukaryotic cells. It is found associated with intranucleolar chromatin and pre-ribosomal particles. It induces chromatin decondensation by binding to histone H1. It is thought to play a role in pre-rRNA transcription and ribosome assembly. May play a role in the process of transcriptional elongation. Binds RNA oligonucleotides with 5'-UUAGGG-3' repeats more tightly than the telomeric single-stranded DNA 5'-TTAGGG-3' repeats. This Homo sapiens (Human) protein is Nucleolin (NCL).